The sequence spans 136 residues: Large ribosomal subunit protein uL16 (136 aa).

The protein belongs to the universal ribosomal protein uL16 family. Part of the 50S ribosomal subunit.

Functionally, binds 23S rRNA and is also seen to make contacts with the A and possibly P site tRNAs. This Rickettsia bellii (strain OSU 85-389) protein is Large ribosomal subunit protein uL16.